The primary structure comprises 283 residues: Serine protease 57 (283 aa).

The first 31 residues, 1–31, serve as a signal peptide directing secretion; it reads MGLGLRGWGRPLLTVATALMLPVKPPAGSWG. Positions 34–263 constitute a Peptidase S1 domain; that stretch reads IIGGHEVTPH…FVAWIWDVVR (230 aa). Cys-59 and Cys-75 are joined by a disulfide. Active-site charge relay system residues include His-74 and Asp-122. N-linked (GlcNAc...) asparagine glycosylation is found at Asn-129 and Asn-189. 3 disulfide bridges follow: Cys-157–Cys-224, Cys-188–Cys-202, and Cys-214–Cys-239. The active-site Charge relay system is the Ser-218.

This sequence belongs to the peptidase S1 family. Post-translationally, after cleavage of the signal peptide, the N-terminus is probably further processed by CTSC. Processing by CTSC is probably required for accumulation in cytoplasmic granules; in the absence of CTSC the protein does not accumulate. In terms of processing, N-glycosylated. As to expression, detected in peripheral blood neutrophil granulocytes, but not in other types of leukocytes. Detected in neutrophils and neutrophil precursors in bone marrow (at protein level). Detected in myeloblasts and promyelocytes in bone marrow.

It is found in the cytoplasmic granule lumen. Its subcellular location is the secreted. With respect to regulation, inhibited by SERPINA1, SERPINC1 and SERPING1. In terms of biological role, serine protease that cleaves preferentially after Arg residues. Can also cleave after citrulline (deimidated arginine) and methylarginine residues. The polypeptide is Serine protease 57 (PRSS57) (Homo sapiens (Human)).